Here is a 355-residue protein sequence, read N- to C-terminus: Holliday junction branch migration complex subunit RuvB (355 aa).

A large ATPase domain (RuvB-L) region spans residues 4–190 (TDKLAAERII…FGIVARLEFY (187 aa)). Residues Leu29, Arg30, Gly71, Lys74, Thr75, Thr76, 137-139 (EDY), Arg180, Tyr190, and Arg227 each bind ATP. Thr75 contacts Mg(2+). A small ATPAse domain (RuvB-S) region spans residues 191–261 (DADQLARIVR…VADAALAMLD (71 aa)). A head domain (RuvB-H) region spans residues 264-355 (PVGFDLMDRK…RGMWDTPAGK (92 aa)). Residues Arg300, Arg319, and Arg324 each contribute to the DNA site.

This sequence belongs to the RuvB family. In terms of assembly, homohexamer. Forms an RuvA(8)-RuvB(12)-Holliday junction (HJ) complex. HJ DNA is sandwiched between 2 RuvA tetramers; dsDNA enters through RuvA and exits via RuvB. An RuvB hexamer assembles on each DNA strand where it exits the tetramer. Each RuvB hexamer is contacted by two RuvA subunits (via domain III) on 2 adjacent RuvB subunits; this complex drives branch migration. In the full resolvosome a probable DNA-RuvA(4)-RuvB(12)-RuvC(2) complex forms which resolves the HJ.

The protein localises to the cytoplasm. It carries out the reaction ATP + H2O = ADP + phosphate + H(+). Functionally, the RuvA-RuvB-RuvC complex processes Holliday junction (HJ) DNA during genetic recombination and DNA repair, while the RuvA-RuvB complex plays an important role in the rescue of blocked DNA replication forks via replication fork reversal (RFR). RuvA specifically binds to HJ cruciform DNA, conferring on it an open structure. The RuvB hexamer acts as an ATP-dependent pump, pulling dsDNA into and through the RuvAB complex. RuvB forms 2 homohexamers on either side of HJ DNA bound by 1 or 2 RuvA tetramers; 4 subunits per hexamer contact DNA at a time. Coordinated motions by a converter formed by DNA-disengaged RuvB subunits stimulates ATP hydrolysis and nucleotide exchange. Immobilization of the converter enables RuvB to convert the ATP-contained energy into a lever motion, pulling 2 nucleotides of DNA out of the RuvA tetramer per ATP hydrolyzed, thus driving DNA branch migration. The RuvB motors rotate together with the DNA substrate, which together with the progressing nucleotide cycle form the mechanistic basis for DNA recombination by continuous HJ branch migration. Branch migration allows RuvC to scan DNA until it finds its consensus sequence, where it cleaves and resolves cruciform DNA. The protein is Holliday junction branch migration complex subunit RuvB of Burkholderia ambifaria (strain ATCC BAA-244 / DSM 16087 / CCUG 44356 / LMG 19182 / AMMD) (Burkholderia cepacia (strain AMMD)).